The chain runs to 81 residues: Large ribosomal subunit protein bL27 (81 aa).

The span at 1–11 (MATSKSGGSSK) shows a compositional bias: polar residues. Residues 1–26 (MATSKSGGSSKNGRDSISKRLGVKRS) form a disordered region.

It belongs to the bacterial ribosomal protein bL27 family.

This chain is Large ribosomal subunit protein bL27, found in Borrelia turicatae (strain 91E135).